Here is a 257-residue protein sequence, read N- to C-terminus: uncharacterized protein (257 aa).

Residues 1-22 form the signal peptide; the sequence is MRYLKRLSWYISILILIVVIAG. Cysteine 23 carries the N-palmitoyl cysteine lipid modification. Cysteine 23 is lipidated: S-diacylglycerol cysteine.

It belongs to the staphylococcal tandem lipoprotein family.

The protein resides in the cell membrane. This is an uncharacterized protein from Staphylococcus aureus (strain N315).